Here is a 486-residue protein sequence, read N- to C-terminus: FAD-dependent oxidoreductase domain-containing protein 1 (486 aa).

A helical membrane pass occupies residues 66–86 (VVVVGGGVLGLSVAYWLKQLE).

In terms of assembly, associates with components of the mitochondrial respiratory chain complex I. The cofactor is FAD.

It localises to the mitochondrion inner membrane. Functionally, required for the assembly of the mitochondrial membrane respiratory chain NADH dehydrogenase (Complex I). Involved in mid-late stages of complex I assembly. The chain is FAD-dependent oxidoreductase domain-containing protein 1 (FOXRED1) from Macaca fascicularis (Crab-eating macaque).